A 336-amino-acid polypeptide reads, in one-letter code: Anthranilate phosphoribosyltransferase (336 aa).

5-phospho-alpha-D-ribose 1-diphosphate contacts are provided by residues G83, 86 to 87, T91, 93 to 96, 111 to 119, and S123; these read GD, NIST, and KHGNRSVSS. Position 83 (G83) interacts with anthranilate. S95 is a Mg(2+) binding site. N114 serves as a coordination point for anthranilate. Position 169 (R169) interacts with anthranilate. Positions 227 and 228 each coordinate Mg(2+).

The protein belongs to the anthranilate phosphoribosyltransferase family. As to quaternary structure, homodimer. Requires Mg(2+) as cofactor.

It catalyses the reaction N-(5-phospho-beta-D-ribosyl)anthranilate + diphosphate = 5-phospho-alpha-D-ribose 1-diphosphate + anthranilate. The protein operates within amino-acid biosynthesis; L-tryptophan biosynthesis; L-tryptophan from chorismate: step 2/5. Functionally, catalyzes the transfer of the phosphoribosyl group of 5-phosphorylribose-1-pyrophosphate (PRPP) to anthranilate to yield N-(5'-phosphoribosyl)-anthranilate (PRA). This Vibrio campbellii (strain ATCC BAA-1116) protein is Anthranilate phosphoribosyltransferase.